The primary structure comprises 166 residues: Phosphopantetheine adenylyltransferase (166 aa).

Residue serine 10 coordinates substrate. Residues 10-11 (SF) and histidine 18 each bind ATP. Substrate-binding residues include lysine 42, alanine 79, and arginine 93. ATP is bound by residues 94-96 (GLR), glutamate 104, and 129-135 (VRPITAT).

This sequence belongs to the bacterial CoaD family. In terms of assembly, homohexamer. The cofactor is Mg(2+).

The protein resides in the cytoplasm. It carries out the reaction (R)-4'-phosphopantetheine + ATP + H(+) = 3'-dephospho-CoA + diphosphate. It participates in cofactor biosynthesis; coenzyme A biosynthesis; CoA from (R)-pantothenate: step 4/5. Its function is as follows. Reversibly transfers an adenylyl group from ATP to 4'-phosphopantetheine, yielding dephospho-CoA (dPCoA) and pyrophosphate. The polypeptide is Phosphopantetheine adenylyltransferase (Methylobacterium nodulans (strain LMG 21967 / CNCM I-2342 / ORS 2060)).